A 155-amino-acid chain; its full sequence is SsrA-binding protein (155 aa).

It belongs to the SmpB family.

It localises to the cytoplasm. Required for rescue of stalled ribosomes mediated by trans-translation. Binds to transfer-messenger RNA (tmRNA), required for stable association of tmRNA with ribosomes. tmRNA and SmpB together mimic tRNA shape, replacing the anticodon stem-loop with SmpB. tmRNA is encoded by the ssrA gene; the 2 termini fold to resemble tRNA(Ala) and it encodes a 'tag peptide', a short internal open reading frame. During trans-translation Ala-aminoacylated tmRNA acts like a tRNA, entering the A-site of stalled ribosomes, displacing the stalled mRNA. The ribosome then switches to translate the ORF on the tmRNA; the nascent peptide is terminated with the 'tag peptide' encoded by the tmRNA and targeted for degradation. The ribosome is freed to recommence translation, which seems to be the essential function of trans-translation. The protein is SsrA-binding protein of Alkaliphilus oremlandii (strain OhILAs) (Clostridium oremlandii (strain OhILAs)).